A 154-amino-acid chain; its full sequence is Myoglobin (154 aa).

Positions 2–148 constitute a Globin domain; that stretch reads GLSDQEWQHV…FRNDMASKYK (147 aa). His65 is a nitrite binding site. His65 contributes to the O2 binding site. His94 contacts heme b.

As to quaternary structure, monomeric.

Its subcellular location is the cytoplasm. The protein resides in the sarcoplasm. The enzyme catalyses Fe(III)-heme b-[protein] + nitric oxide + H2O = Fe(II)-heme b-[protein] + nitrite + 2 H(+). It carries out the reaction H2O2 + AH2 = A + 2 H2O. Its function is as follows. Monomeric heme protein which primary function is to store oxygen and facilitate its diffusion within muscle tissues. Reversibly binds oxygen through a pentacoordinated heme iron and enables its timely and efficient release as needed during periods of heightened demand. Depending on the oxidative conditions of tissues and cells, and in addition to its ability to bind oxygen, it also has a nitrite reductase activity whereby it regulates the production of bioactive nitric oxide. Under stress conditions, like hypoxia and anoxia, it also protects cells against reactive oxygen species thanks to its pseudoperoxidase activity. The sequence is that of Myoglobin from Dromaius novaehollandiae (Emu).